The primary structure comprises 394 residues: Potassium channel subfamily K member 18 (394 aa).

The Cytoplasmic segment spans residues 1–31 (MEAEEPPEARRCCPEALGKARGCCPEALGKL). Residues 32–52 (LPGLCFLCCLVTYALVGAALF) form a helical membrane-spanning segment. Asparagine 83 carries an N-linked (GlcNAc...) asparagine glycan. Residues 114-140 (FLSALFFCCTVFSTVGYGHMYPVTRLG) constitute an intramembrane region (pore-forming). K(+) is bound by residues threonine 127, valine 128, glycine 129, and tyrosine 130. Residues 127 to 132 (TVGYGH) are selectivity filter 1. A helical transmembrane segment spans residues 142-162 (FLCMLYALFGIPLMFLVLTDI). Over 163 to 292 (GDILATILSR…EVGQQVERLD (130 aa)) the chain is Cytoplasmic. An interaction with calcineurin region spans residues 210–215 (PQIVID). The interval 261–266 (RSNSCP) is interaction with YWHAH. Phosphoserine occurs at positions 264 and 276. Residues 293-313 (IPLPVIALVVFAYISCAAAIL) traverse the membrane as a helical segment. Residues 326 to 340 (FYFCFVTLTTIGFGD) constitute an intramembrane region (pore-forming). A selectivity filter 2 region spans residues 335–340 (TIGFGD). Residues 347-367 (HFFLFFSIYIIVGMEILFIAF) form a helical membrane-spanning segment. Topologically, residues 368-394 (KLMQNRLLHTYKTLMLFVCQREVSLPW) are cytoplasmic.

Belongs to the two pore domain potassium channel (TC 1.A.1.8) family. Homodimer. Heterodimer with KCNK2. Heterodimer with KCNK10. Interacts with calcineurin. Interacts with YWHAH, in a phosphorylation-dependent manner. Post-translationally, phosphorylation of Ser-264 is required for the binding of 14-3-3eta/YWHAH. Calcineurin-mediated dephosphorylation of Ser-276 enhances channel activity. N-glycosylated. As to expression, detected in brain cortex, cerebellum, dorsal root ganglion, spinal cord and testis. High expression in trigeminal ganglion (at protein level), also expressed in autonomic nervous system ganglia such as the stellate ganglion and paravertebral sympathetic ganglia. Expressed in all adult spinal cord and brain regions, with slightly higher expression in thalamus, hypothalamus, hippocampus and posterior corte (at protein level). In non-neuronal tissues, substantial expression found in lung and heart and weal expression in liver, testis, kidney, small intestine and spleen. Expressed in regulatory T cells (at protein level).

The protein localises to the cell membrane. The enzyme catalyses K(+)(in) = K(+)(out). Activated upon cell stimulation via Ca(2+)-mobilizing receptors, such as CHRM1/M1 muscarinic receptor and AGTR1/AT1a angiotensin receptor. Activated by volatile anesthetics, such as isoflurane and inhibited by local anesthetics such as bupivacaine and lidocaine. Inhibited by extracellular acidic pH. Inhibited by Zn(2+) ions. Inhibited by hydroxy-alpha-sanshool, an ingredient of Schezuan pepper. Inhibited by Ba(2+) ions. K(+) channel that conducts outward and inward rectifying currents at depolarized and hyperpolarized membrane potentials, respectively. The outward rectifying currents are voltage-dependent, coupled to K(+) electrochemical gradient across the membrane, whereas the inward currents can be induced in response to activation of Ca(2+)-mobilizing receptors. Homo- and heterodimerizes to form functional channels with distinct regulatory and gating properties. In trigeminal ganglia sensory neurons, the heterodimers of KCNK18/TRESK and KCNK2/TREK-1 or KCNK10/TREK-2 inhibit neuronal firing and neurogenic inflammation by stabilizing the resting membrane potential at K(+) equilibrium potential as well as by regulating the threshold of action potentials and the spike frequency. In thymocytes, conducts K(+) currents upon T cell receptor (TCR) signaling leading to sustained Ca(2+) influx and NF-kappa-B activation, FOXP3 transcription and positive selection of regulatory T cell (Treg) progenitor subsets. Appears to mediate the analgesics effects of hydroxy-alpha-sanshool, a metabolite naturally present in Schezuan pepper and other Xanthoxylum plants. In Mus musculus (Mouse), this protein is Potassium channel subfamily K member 18.